The following is a 1497-amino-acid chain: DNA-directed RNA polymerase subunit beta (1497 aa).

This sequence belongs to the RNA polymerase beta chain family. In terms of assembly, the RNAP catalytic core consists of 2 alpha, 1 beta, 1 beta' and 1 omega subunit. When a sigma factor is associated with the core the holoenzyme is formed, which can initiate transcription.

The enzyme catalyses RNA(n) + a ribonucleoside 5'-triphosphate = RNA(n+1) + diphosphate. In terms of biological role, DNA-dependent RNA polymerase catalyzes the transcription of DNA into RNA using the four ribonucleoside triphosphates as substrates. The protein is DNA-directed RNA polymerase subunit beta of Trichlorobacter lovleyi (strain ATCC BAA-1151 / DSM 17278 / SZ) (Geobacter lovleyi).